The following is a 24-amino-acid chain: U1-plectoxin-Pt1e (24 aa).

The cysteines at positions 4 and 18 are disulfide-linked.

Belongs to the neurotoxin 02 (plectoxin) family. 02 (plectoxin) subfamily. In terms of processing, contains 5 disulfide bonds. As to expression, expressed by the venom gland.

It localises to the secreted. Its function is as follows. Potent toxin that may paralyze and/or kill insect pests such as H.virescens (lepidoptera), S.exigua (beet armyworm) and M.sexta (tobacco hornworm). This chain is U1-plectoxin-Pt1e, found in Plectreurys tristis (Spider).